Here is a 509-residue protein sequence, read N- to C-terminus: Maturase K (509 aa).

It belongs to the intron maturase 2 family. MatK subfamily.

Its subcellular location is the plastid. It localises to the chloroplast. In terms of biological role, usually encoded in the trnK tRNA gene intron. Probably assists in splicing its own and other chloroplast group II introns. In Nicotiana tomentosiformis (Tobacco), this protein is Maturase K.